A 217-amino-acid polypeptide reads, in one-letter code: Elongation factor Ts (217 aa).

The interval 82–85 is involved in Mg(2+) ion dislocation from EF-Tu; it reads TDFV.

It belongs to the EF-Ts family.

The protein localises to the cytoplasm. In terms of biological role, associates with the EF-Tu.GDP complex and induces the exchange of GDP to GTP. It remains bound to the aminoacyl-tRNA.EF-Tu.GTP complex up to the GTP hydrolysis stage on the ribosome. This is Elongation factor Ts from Synechococcus sp. (strain RCC307).